A 324-amino-acid chain; its full sequence is tRNA-dihydrouridine(20a/20b) synthase [NAD(P)+]-like (324 aa).

FMN contacts are provided by residues 33–35 (PMV) and Gln-87. The active-site Proton donor is Cys-116. Residues Lys-158, His-186, 216–218 (NGD), and 240–241 (AR) each bind FMN.

It belongs to the Dus family. Dus4 subfamily. It depends on FMN as a cofactor.

It catalyses the reaction 5,6-dihydrouridine(20a) in tRNA + NADP(+) = uridine(20a) in tRNA + NADPH + H(+). It carries out the reaction 5,6-dihydrouridine(20a) in tRNA + NAD(+) = uridine(20a) in tRNA + NADH + H(+). The catalysed reaction is 5,6-dihydrouridine(20b) in tRNA + NAD(+) = uridine(20b) in tRNA + NADH + H(+). The enzyme catalyses 5,6-dihydrouridine(20b) in tRNA + NADP(+) = uridine(20b) in tRNA + NADPH + H(+). Functionally, catalyzes the synthesis of dihydrouridine, a modified base found in the D-loop of most tRNAs. This chain is tRNA-dihydrouridine(20a/20b) synthase [NAD(P)+]-like (Dus4l), found in Mus musculus (Mouse).